The chain runs to 432 residues: MGKKSIIILAAGAGTRMKSDTPKVLHKISGKPMLYYSIKEALKLSDDITVVLYHQFEKVKAEIEKYFSNINFVIQDHKNYPGTGGAVMGITPKYEKVLVLNGDMPLIQANELEKFEINATIVMSVLELESADGYGRVIIENGNVKKIVEQKDASEDELKITTANAGIYQFETKFLLENLPKLDNNNAQKEYYITDLVEMAISQGKVLKPLVVNEENFKGVNSKVELADAEVIHQNRIKKEFMKAGVIMRLPDTIYIEEGVEIEGESIIENGVSLLGNAKIINSHIKTNSVVEDSIVKDSDVGPMGRVRPGSELTNTHIGNFVETKKAKLTGVKAGHLSYLGDCSIDEGTNIGCGTITCNYDGVNKHQTIIGKNVFVGSDTQFVAPVNIEDDVLIGAGSTVTGNVKKGELYLTRAKAKTIDGFFYKHFSSKKK.

A pyrophosphorylase region spans residues 1–223; the sequence is MGKKSIIILA…EENFKGVNSK (223 aa). Residues 9–12, lysine 23, glutamine 75, and 82–83 each bind UDP-N-acetyl-alpha-D-glucosamine; these read LAAG and GT. Position 103 (aspartate 103) interacts with Mg(2+). UDP-N-acetyl-alpha-D-glucosamine-binding residues include glycine 135, glutamate 149, asparagine 164, and asparagine 221. Asparagine 221 is a Mg(2+) binding site. A linker region spans residues 224-244; it reads VELADAEVIHQNRIKKEFMKA. The segment at 245–432 is N-acetyltransferase; the sequence is GVIMRLPDTI…FYKHFSSKKK (188 aa). Positions 308 and 325 each coordinate UDP-N-acetyl-alpha-D-glucosamine. Histidine 336 serves as the catalytic Proton acceptor. The UDP-N-acetyl-alpha-D-glucosamine site is built by tyrosine 339 and asparagine 350. Acetyl-CoA-binding positions include 359-360, serine 378, alanine 396, and arginine 413; that span reads NY.

The protein in the N-terminal section; belongs to the N-acetylglucosamine-1-phosphate uridyltransferase family. This sequence in the C-terminal section; belongs to the transferase hexapeptide repeat family. In terms of assembly, homotrimer. It depends on Mg(2+) as a cofactor.

It localises to the cytoplasm. It carries out the reaction alpha-D-glucosamine 1-phosphate + acetyl-CoA = N-acetyl-alpha-D-glucosamine 1-phosphate + CoA + H(+). The catalysed reaction is N-acetyl-alpha-D-glucosamine 1-phosphate + UTP + H(+) = UDP-N-acetyl-alpha-D-glucosamine + diphosphate. It functions in the pathway nucleotide-sugar biosynthesis; UDP-N-acetyl-alpha-D-glucosamine biosynthesis; N-acetyl-alpha-D-glucosamine 1-phosphate from alpha-D-glucosamine 6-phosphate (route II): step 2/2. It participates in nucleotide-sugar biosynthesis; UDP-N-acetyl-alpha-D-glucosamine biosynthesis; UDP-N-acetyl-alpha-D-glucosamine from N-acetyl-alpha-D-glucosamine 1-phosphate: step 1/1. Its pathway is bacterial outer membrane biogenesis; LPS lipid A biosynthesis. Functionally, catalyzes the last two sequential reactions in the de novo biosynthetic pathway for UDP-N-acetylglucosamine (UDP-GlcNAc). The C-terminal domain catalyzes the transfer of acetyl group from acetyl coenzyme A to glucosamine-1-phosphate (GlcN-1-P) to produce N-acetylglucosamine-1-phosphate (GlcNAc-1-P), which is converted into UDP-GlcNAc by the transfer of uridine 5-monophosphate (from uridine 5-triphosphate), a reaction catalyzed by the N-terminal domain. This Aliarcobacter butzleri (strain RM4018) (Arcobacter butzleri) protein is Bifunctional protein GlmU.